Here is a 321-residue protein sequence, read N- to C-terminus: Lipoyl synthase (321 aa).

Residues Cys68, Cys73, Cys79, Cys94, Cys98, Cys101, and Ser308 each coordinate [4Fe-4S] cluster. One can recognise a Radical SAM core domain in the interval 80-297 (FNHGTATFMI…KALADELGFT (218 aa)).

Belongs to the radical SAM superfamily. Lipoyl synthase family. Requires [4Fe-4S] cluster as cofactor.

It localises to the cytoplasm. The enzyme catalyses [[Fe-S] cluster scaffold protein carrying a second [4Fe-4S](2+) cluster] + N(6)-octanoyl-L-lysyl-[protein] + 2 oxidized [2Fe-2S]-[ferredoxin] + 2 S-adenosyl-L-methionine + 4 H(+) = [[Fe-S] cluster scaffold protein] + N(6)-[(R)-dihydrolipoyl]-L-lysyl-[protein] + 4 Fe(3+) + 2 hydrogen sulfide + 2 5'-deoxyadenosine + 2 L-methionine + 2 reduced [2Fe-2S]-[ferredoxin]. It functions in the pathway protein modification; protein lipoylation via endogenous pathway; protein N(6)-(lipoyl)lysine from octanoyl-[acyl-carrier-protein]: step 2/2. Its function is as follows. Catalyzes the radical-mediated insertion of two sulfur atoms into the C-6 and C-8 positions of the octanoyl moiety bound to the lipoyl domains of lipoate-dependent enzymes, thereby converting the octanoylated domains into lipoylated derivatives. In Shewanella oneidensis (strain ATCC 700550 / JCM 31522 / CIP 106686 / LMG 19005 / NCIMB 14063 / MR-1), this protein is Lipoyl synthase.